The following is a 360-amino-acid chain: Tryptophan--tRNA ligase, mitochondrial (360 aa).

A mitochondrion-targeting transit peptide spans 1–18 (MALHSMRKARERWSFIRA). Residues Q42 and 48–51 (HLGN) each bind ATP. D167 provides a ligand contact to L-tryptophan. ATP is bound by residues 179–181 (GED), V217, and 226–230 (KMSKS).

It belongs to the class-I aminoacyl-tRNA synthetase family. As to expression, brain.

It is found in the mitochondrion matrix. The protein localises to the mitochondrion. It carries out the reaction tRNA(Trp) + L-tryptophan + ATP = L-tryptophyl-tRNA(Trp) + AMP + diphosphate + H(+). Catalyzes the attachment of tryptophan to tRNA(Trp) in a two-step reaction: tryptophan is first activated by ATP to form Trp-AMP and then transferred to the acceptor end of tRNA(Trp). The protein is Tryptophan--tRNA ligase, mitochondrial (WARS2) of Homo sapiens (Human).